Reading from the N-terminus, the 234-residue chain is Large ribosomal subunit protein uL1 (234 aa).

The protein belongs to the universal ribosomal protein uL1 family. In terms of assembly, part of the 50S ribosomal subunit.

Binds directly to 23S rRNA. The L1 stalk is quite mobile in the ribosome, and is involved in E site tRNA release. In terms of biological role, protein L1 is also a translational repressor protein, it controls the translation of the L11 operon by binding to its mRNA. In Klebsiella pneumoniae (strain 342), this protein is Large ribosomal subunit protein uL1.